Consider the following 575-residue polypeptide: Electron transfer flavoprotein-ubiquinone oxidoreductase, mitochondrial (575 aa).

The transit peptide at 1-33 (MQRVLRAAAAGIGHASGHRAPRWGAAAAAARWL) directs the protein to the mitochondrion. 44 to 58 (VVVVGAGPAGLAAAI) provides a ligand contact to FAD. The stretch at 82–103 (VGAHVLSGNVFEPRALDELIPK) is an intramembrane region. 2 residues coordinate a ubiquinone: glycine 276 and glycine 277. The stretch at 343-363 (IPNPVFPGGAIIGCSAGFLNV) is an intramembrane region. [4Fe-4S] cluster-binding residues include cysteine 520, cysteine 544, cysteine 547, and cysteine 550. Residues 535 to 564 (QKLHINAQNCLHCKACDIKDPKQNIEWTVP) form the 4Fe-4S ferredoxin-type domain.

Belongs to the ETF-QO/FixC family. It depends on [4Fe-4S] cluster as a cofactor. The cofactor is FAD.

It is found in the mitochondrion inner membrane. It carries out the reaction a ubiquinone + reduced [electron-transfer flavoprotein] = a ubiquinol + oxidized [electron-transfer flavoprotein] + H(+). Accepts electrons from ETF and reduces ubiquinone. The protein is Electron transfer flavoprotein-ubiquinone oxidoreductase, mitochondrial of Oryza sativa subsp. japonica (Rice).